Reading from the N-terminus, the 206-residue chain is Cytochrome b-245 chaperone 1 homolog (206 aa).

The chain crosses the membrane as a helical span at residues 21–43 (GIRSWSILVGIASVGLAAAYYSS). Positions 172–206 (ADDDYPDDDDGIEDLGLGDSSDSQDDPDGDDDEEH) are disordered. Acidic residues-rich tracts occupy residues 174–184 (DDYPDDDDGIE) and 193–206 (DSQD…DEEH).

This sequence belongs to the CYBC1 family.

It is found in the endoplasmic reticulum membrane. Functions as a chaperone necessary for a stable expression of the CYBA and CYBB subunits of the cytochrome b-245 heterodimer. This is Cytochrome b-245 chaperone 1 homolog from Danio rerio (Zebrafish).